The following is a 733-amino-acid chain: DNA replication licensing factor Mcm5 (733 aa).

Residues 328–534 (IYERLSQSLA…RDITLAKHII (207 aa)) enclose the MCM domain. ADP is bound at residue Arg368. The Arginine finger motif lies at 509–512 (SRFD).

The protein belongs to the MCM family. Component of the Mcm2-7 complex. The complex forms a toroidal hexameric ring with the proposed subunit order Mcm2-Mcm6-Mcm4-Mcm7-Mcm3-Mcm5.

The protein resides in the nucleus. The protein localises to the cytoplasm. It is found in the cytosol. The enzyme catalyses ATP + H2O = ADP + phosphate + H(+). Functionally, acts as a component of the Mcm2-7 complex (Mcm complex) which is the putative replicative helicase essential for 'once per cell cycle' DNA replication initiation and elongation in eukaryotic cells. Core component of CDC45-MCM-GINS (CMG) helicase, the molecular machine that unwinds template DNA during replication, and around which the replisome is built. The active ATPase sites in the Mcm2-7 ring are formed through the interaction surfaces of two neighboring subunits such that a critical structure of a conserved arginine finger motif is provided in trans relative to the ATP-binding site of the Walker A box of the adjacent subunit. The six ATPase active sites, however, are likely to contribute differentially to the complex helicase activity. This is DNA replication licensing factor Mcm5 (Mcm5) from Drosophila melanogaster (Fruit fly).